The sequence spans 481 residues: 3-isopropylmalate dehydratase large subunit (481 aa).

Residues Cys363, Cys423, and Cys426 each contribute to the [4Fe-4S] cluster site. Residues 432–459 (DQLKPGERSASTSNRNFEGRQGPGGRTH) are disordered.

The protein belongs to the aconitase/IPM isomerase family. LeuC type 1 subfamily. Heterodimer of LeuC and LeuD. It depends on [4Fe-4S] cluster as a cofactor.

The enzyme catalyses (2R,3S)-3-isopropylmalate = (2S)-2-isopropylmalate. It functions in the pathway amino-acid biosynthesis; L-leucine biosynthesis; L-leucine from 3-methyl-2-oxobutanoate: step 2/4. Catalyzes the isomerization between 2-isopropylmalate and 3-isopropylmalate, via the formation of 2-isopropylmaleate. This chain is 3-isopropylmalate dehydratase large subunit, found in Corynebacterium glutamicum (strain ATCC 13032 / DSM 20300 / JCM 1318 / BCRC 11384 / CCUG 27702 / LMG 3730 / NBRC 12168 / NCIMB 10025 / NRRL B-2784 / 534).